We begin with the raw amino-acid sequence, 154 residues long: Protein X (154 aa).

Residues 68 to 117 (PCALRFTSARCMETTVNAHQSLPKVLHKRTLGLPAMSTTDLEAYFKDCVF) form a mitochondrial targeting sequence region.

This sequence belongs to the orthohepadnavirus protein X family. As to quaternary structure, may form homodimer. May interact with host CEBPA, CFLAR, CREB1, DDB1, E4F1, HBXIP, HSPD1/HSP60, NFKBIA, POLR2E and SMAD4. Interacts with host SMC5-SMC6 complex and induces its degradation. Interacts with host TRPC4AP; leading to prevent ubiquitination of TRPC4AP. Interacts with host PLSCR1; this interaction promotes ubiquitination and degradation of HBx and impairs HBx-mediated cell proliferation. A fraction may be phosphorylated in insect cells and HepG2 cells, a human hepatoblastoma cell line. Phosphorylated in vitro by host protein kinase C or mitogen-activated protein kinase. N-acetylated in insect cells.

Its subcellular location is the host cytoplasm. The protein localises to the host nucleus. It localises to the host mitochondrion. Functionally, multifunctional protein that plays a role in silencing host antiviral defenses and promoting viral transcription. Does not seem to be essential for HBV infection. May be directly involved in development of cirrhosis and liver cancer (hepatocellular carcinoma). Most of cytosolic activities involve modulation of cytosolic calcium. The effect on apoptosis is controversial depending on the cell types in which the studies have been conducted. May induce apoptosis by localizing in mitochondria and causing loss of mitochondrial membrane potential. May also modulate apoptosis by binding host CFLAR, a key regulator of the death-inducing signaling complex (DISC). Promotes viral transcription by using the host E3 ubiquitin ligase DDB1 to target the SMC5-SMC6 complex to proteasomal degradation. This host complex would otherwise bind to viral episomal DNA, and prevents its transcription. Moderately stimulates transcription of many different viral and cellular transcription elements. Promoters and enhancers stimulated by HBx contain DNA binding sites for NF-kappa-B, AP-1, AP-2, c-EBP, ATF/CREB, or the calcium-activated factor NF-AT. This is Protein X from Homo sapiens (Human).